Reading from the N-terminus, the 319-residue chain is Lipopolysaccharide heptosyltransferase 1 (319 aa).

Residues T187, T188, K192, E222, M242, D261, T262, G263, and H266 each coordinate ADP-L-glycero-beta-D-manno-heptose.

The protein belongs to the glycosyltransferase 9 family.

It is found in the cell inner membrane. The enzyme catalyses an alpha-Kdo-(2-&gt;4)-alpha-Kdo-(2-&gt;6)-lipid A + ADP-L-glycero-beta-D-manno-heptose = an L-alpha-D-Hep-(1-&gt;5)-[alpha-Kdo-(2-&gt;4)]-alpha-Kdo-(2-&gt;6)-lipid A + ADP + H(+). It catalyses the reaction alpha-Kdo-(2-&gt;4)-alpha-Kdo-(2-&gt;6)-lipid A (E. coli) + ADP-L-glycero-beta-D-manno-heptose = L-alpha-D-Hep-(1-&gt;5)-[alpha-Kdo-(2-&gt;4)]-alpha-Kdo-(2-&gt;6)-lipid A (E. coli) + ADP + H(+). Its pathway is bacterial outer membrane biogenesis; LPS core biosynthesis. Glycosyltransferase involved in the biosynthesis of the core oligosaccharide region of lipopolysaccharide (LPS). Catalyzes the addition of the first heptose unit to one 3-deoxy-D-manno-octulosonic acid (Kdo) residue of the Kdo2-lipid A module. The analog ADP-mannose can serve as an alternative donor in place of ADP-L-glycero-D-manno-heptose for the glycosylation of Kdo2-lipid A. Displays no activity with ADP-glucose, GDP-mannose, UDP-glucose or UDP-galactose. The chain is Lipopolysaccharide heptosyltransferase 1 from Escherichia coli (strain K12).